Reading from the N-terminus, the 816-residue chain is H(+)/Cl(-) exchange transporter 5 (816 aa).

The Cytoplasmic segment spans residues 1-124 (MAMWQGAMDN…WALIHSVSDA (124 aa)). 2 helical membrane-spanning segments follow: residues 125–162 (FSGWLLMLLIGLLSGSLAGLIDISAHWMTDLKEGICTG) and 208–231 (VNYFMYVLWALLFAFLAVSLVKVF). The Selectivity filter part_1 motif lies at 237 to 241 (GSGIP). Ser238 is a binding site for chloride. The segment at residues 240–247 (IPEIKTIL) is an intramembrane region (helical). Helical transmembrane passes span 256-275 (LGKWTLVIKTITLVLAVSSG) and 281-300 (EGPLVHVACCCGNILCHCFN). The Selectivity filter part_2 signature appears at 279–283 (GKEGP). 2 consecutive intramembrane regions (helical) follow at residues 312–324 (VLSAAAAAGVSVA) and 328–336 (PIGGVLFSL). A run of 5 helical transmembrane segments spans residues 348-366 (LWRSFFAALVAAFTLRSIN), 389-414 (LVPFILLGIFGGLWGALFIRTNIAWC), 422-442 (LGKYPVIEVLVVTAITAILAF), 498-518 (MWQLALTLILKIVITIFTFGM), and 523-542 (GLFIPSMAVGAIAGRLLGVG). Residues 523–527 (GLFIP) carry the Selectivity filter part_3 motif. Chloride is bound at residue Phe525. Positions 570–584 (GLYAMVGAAACLGGV) form an intramembrane region, helical. An intramembrane region (note=Loop between two helices) is located at residues 585 to 587 (TRM). Positions 588–599 (TVSLVVIMFELT) form an intramembrane region, helical. Residues 600-604 (GGLEY) constitute an intramembrane region (note=Loop between two helices). Residues 605–622 (IVPLMAAAMTSKWVADAL) form a helical membrane-spanning segment. Residues 623-816 (GREGIYDAHI…NQDPDSILFN (194 aa)) lie on the Cytoplasmic side of the membrane. Tyr628 contributes to the chloride binding site. 2 consecutive CBS domains span residues 656–720 (MKPR…ARKK) and 752–812 (ILDL…DPDS). Residues Thr666, 687 to 689 (YSG), and 794 to 797 (TKKD) contribute to the ATP site.

Belongs to the chloride channel (TC 2.A.49) family. ClC-5/CLCN5 subfamily. As to quaternary structure, interacts with NEDD4 and NEDD4L. In terms of processing, ubiquitinated by NEDD4L in the presence of albumin; which promotes endocytosis and proteasomal degradation.

The protein resides in the golgi apparatus membrane. Its subcellular location is the endosome membrane. It localises to the cell membrane. The enzyme catalyses 2 chloride(in) + H(+)(out) = 2 chloride(out) + H(+)(in). Proton-coupled chloride transporter. Functions as antiport system and exchanges chloride ions against protons. Important for normal acidification of the endosome lumen. May play an important role in renal tubular function. The CLC channel family contains both chloride channels and proton-coupled anion transporters that exchange chloride or another anion for protons. The absence of conserved gating glutamate residues is typical for family members that function as channels. The chain is H(+)/Cl(-) exchange transporter 5 (CLCN5) from Pongo abelii (Sumatran orangutan).